A 684-amino-acid polypeptide reads, in one-letter code: MSAKDFLVELGTEELPPKALNSLGEAFLSGIEKGLKAAGLSYAAARFYAAPRRLAVLVEQLAVQQPDRTVNLDGPPLQAAFDASGNPTQAALGFAKKCGVDLQQIDKSGPKLRFSQTIAGQPAAGLLPGIVEASLNELPIPKRMRWAARREEFVRPTQWLVMLFGDDVVECEILAQKAGRESRGHRFHNPDNVRISSPAAYLEDLRGAHVLADFAERRELIAKRVAELAAEQQGSAIVPPSLLDEVTALVEWPVPLVCSFEERFLEVPQEALITTMQDNQKYFCLLDANGKLLPRFITVANVESKAPENIVSGNEKVVRPRLTDAEFFFKQDKKQPLESFNERLRNVVFQAQLGTVFEKAQRVSGLAAYIAERIGGNAQNAARAGILSKCDLATEMVGEFPEMQGIAGYYYATHGGEAEDVALALNEQYMPRGAGAELPSTLTGAAVAVADKLDTLVGIFGIGMLPTGSKDPYALRRAALGVLRILIEKQLDLDLVAAVNAAVEQYGDKVKAAGLAEQVLDFVFDRLRARYEDEGVDVAVYQSVRALKPSSPLDFDQRVQAVQAFRQLPEAEALAAANKRVSNILAKSEDEVPPNVDASLLVEAAEKALGSAVANAESEVAPLAAARDYRAALARLAALREPVDTFFADVMVNVDDAAVRANRYALLAKLRGSFLGVADISLLG.

This sequence belongs to the class-II aminoacyl-tRNA synthetase family. Tetramer of two alpha and two beta subunits.

The protein localises to the cytoplasm. The catalysed reaction is tRNA(Gly) + glycine + ATP = glycyl-tRNA(Gly) + AMP + diphosphate. The polypeptide is Glycine--tRNA ligase beta subunit (Pseudomonas aeruginosa (strain UCBPP-PA14)).